A 25-amino-acid polypeptide reads, in one-letter code: Toxin Tpa3 (25 aa).

This sequence belongs to the non-disulfide-bridged peptide (NDBP) superfamily. As to expression, expressed by the venom gland.

The protein localises to the secreted. Its function is as follows. Unknown. Is not toxic to mammals. This chain is Toxin Tpa3, found in Tityus pachyurus (Colombian scorpion).